Here is a 124-residue protein sequence, read N- to C-terminus: Large ribosomal subunit protein uL18 (124 aa).

This sequence belongs to the universal ribosomal protein uL18 family. In terms of assembly, part of the 50S ribosomal subunit; part of the 5S rRNA/L5/L18/L25 subcomplex. Contacts the 5S and 23S rRNAs.

Functionally, this is one of the proteins that bind and probably mediate the attachment of the 5S RNA into the large ribosomal subunit, where it forms part of the central protuberance. The protein is Large ribosomal subunit protein uL18 of Orientia tsutsugamushi (strain Boryong) (Rickettsia tsutsugamushi).